The chain runs to 2617 residues: Non-reducing polyketide synthase epaA (2617 aa).

The interval 95–231 (PNILLSPMVV…AARSISSLQQ (137 aa)) is N-terminal acylcarrier protein transacylase domain (SAT). Cysteine 132 serves as the catalytic Nucleophile; for transacylase activity. Histidine 250 acts as the Proton donor/acceptor; for transacylase activity in catalysis. Residues 372 to 790 (PNEIAVIGMS…GSNASMVVAQ (419 aa)) enclose the Ketosynthase family 3 (KS3) domain. Catalysis depends on for beta-ketoacyl synthase activity residues cysteine 539, histidine 674, and histidine 713. The tract at residues 902–1193 (FGGQISNYVG…ITSMASRALG (292 aa)) is malonyl-CoA:ACP transacylase (MAT) domain. Residues 1282-1413 (PKTLWSLIEA…GKLAFLSGQD (132 aa)) form an N-terminal hotdog fold region. The 310-residue stretch at 1282–1591 (PKTLWSLIEA…YHKVAKASMS (310 aa)) folds into the PKS/mFAS DH domain. A product template (PT) domain region spans residues 1310-1589 (LVSGHVIANT…INYHKVAKAS (280 aa)). Residue histidine 1314 is the Proton acceptor; for dehydratase activity of the active site. The interval 1443–1591 (ADDIIQGRNI…YHKVAKASMS (149 aa)) is C-terminal hotdog fold. Residue aspartate 1499 is the Proton donor; for dehydratase activity of the active site. Residues 1600–1651 (TEAAPSSSTRAHPTSSSSPRLPGPSVPEDKSQNETQPAGTNAVAKKKSEKSA) are disordered. Low complexity predominate over residues 1602–1619 (AAPSSSTRAHPTSSSSPR). Positions 1653 to 1727 (QNVLEKTRAL…GLVEYVQSAV (75 aa)) constitute a Carrier domain. Serine 1687 carries the post-translational modification O-(pantetheine 4'-phosphoryl)serine. Positions 1728 to 1799 (GVPTNGDEPD…PAMPPASSKT (72 aa)) are disordered. The span at 1750 to 1766 (LAPSPSSSSSSTNLTED) shows a compositional bias: low complexity. Residues 1769 to 1785 (LDQAETTTNISSYPGQT) show a composition bias toward polar residues. Residues 1970–2158 (DSLLNKLSYR…VGYGQVDWTD (189 aa)) are methyltransferase domain. The interval 2240–2485 (ITGATGSLGV…LCWTPVNDVA (246 aa)) is NADPH-binding (R) domain.

Pantetheine 4'-phosphate serves as cofactor.

Its pathway is secondary metabolite biosynthesis. Non-reducing polyketide synthase; part of the gene cluster that mediates the biosynthesis of nigerpyrone and its derivatives carbonarone A and pestalamide A. The biosynthesis pathway begins with the polyketide assembly by epaA to form phenylacetyl triketide precursor from successive condensation of two malonyl-CoA, presumably with one phenylacetyl-CoA starter unit produced by the phenylacetyl-CoA ligase epaB. For the nigerpyrone biosynthesis, the reactive polyketide chain is released as an aldehyde through the R-domain. A nonenzymatic cyclization and dehydration may create nigerpyrone. For the biosynthesis of carbonarone A and pestalamide A, an extra methyl group is added through the C-methyltransferase domain. Several further steps involving the dehydrogenase orf1, the cytochrome P450 monooxygenase orf2 and the FAD-dependent monooxygenase orf3 are required to form a carbonarone A precursor which is converted to carbonarone A via cyclization. The O-acetyltransferase epaC could catalyze the transfer of 2-methylsuccinyl-CoA, a common intermediate in the ethylmalonyl-CoA pathway, to generate the final product pestalamide A. The protein is Non-reducing polyketide synthase epaA of Aspergillus niger (strain ATCC MYA-4892 / CBS 513.88 / FGSC A1513).